Reading from the N-terminus, the 229-residue chain is MAKLTKKMKSIKAAVDSTKAYEINEAIAVLKQFATAKFVESVDVAVNLGIDPRKSDQNVRGATVLPHGTGRSVRVAVFTQGANAEAAKEAGADLVGMEDLAELVKKGEMNFDVVIASPDAMRVVGQLGQILGPRGLMPNPKVGTVTPNVADAVKNAKSGQVRYRNDKNGIIHTTIGKVNFSEEQLKENLQALLAALAKAKPTTSKGVFIKKVSLSTTMGAGVAIDQASL.

It belongs to the universal ribosomal protein uL1 family. In terms of assembly, part of the 50S ribosomal subunit.

Functionally, binds directly to 23S rRNA. The L1 stalk is quite mobile in the ribosome, and is involved in E site tRNA release. Protein L1 is also a translational repressor protein, it controls the translation of the L11 operon by binding to its mRNA. This chain is Large ribosomal subunit protein uL1, found in Pasteurella multocida (strain Pm70).